The following is a 665-amino-acid chain: Transketolase (665 aa).

Residue His26 participates in substrate binding. Thiamine diphosphate-binding positions include His66 and 114-116 (GPL). Mg(2+) is bound at residue Asp155. The thiamine diphosphate site is built by Gly156 and Asn185. Mg(2+)-binding residues include Asn185 and Ile187. His261, Arg358, and Ser385 together coordinate substrate. Position 261 (His261) interacts with thiamine diphosphate. Glu411 serves as the catalytic Proton donor. Phe437 is a thiamine diphosphate binding site. Substrate-binding residues include His461, Asp469, and Arg520.

Belongs to the transketolase family. Homodimer. Mg(2+) is required as a cofactor. Requires Ca(2+) as cofactor. Mn(2+) serves as cofactor. The cofactor is Co(2+). It depends on thiamine diphosphate as a cofactor.

The catalysed reaction is D-sedoheptulose 7-phosphate + D-glyceraldehyde 3-phosphate = aldehydo-D-ribose 5-phosphate + D-xylulose 5-phosphate. Catalyzes the transfer of a two-carbon ketol group from a ketose donor to an aldose acceptor, via a covalent intermediate with the cofactor thiamine pyrophosphate. The protein is Transketolase (tkt) of Buchnera aphidicola subsp. Schizaphis graminum (strain Sg).